The sequence spans 438 residues: Putative F-box protein At5g15660 (438 aa).

The interval 1–24 is disordered; that stretch reads MRRRSKKIKTENNSNPETSEERNK. Residues 22–68 enclose the F-box domain; sequence RNKFDEIPHDLVIEILERLPLKSVARFLTVSKLWATTIRSPDFRKSY.

In Arabidopsis thaliana (Mouse-ear cress), this protein is Putative F-box protein At5g15660.